Reading from the N-terminus, the 916-residue chain is DNA repair endonuclease XPF (916 aa).

The interval 1-457 (MESGQPARRI…EVWMKFRKED (457 aa)) is helicase-like. Leucine-zipper regions lie at residues 233–254 (LNAC…DLSL) and 270–298 (LDPL…LQYL). The residue at position 289 (Lys289) is an N6-acetyllysine. Residues 460 to 487 (KRIRKSHKRPKDPQNKERASTKERTLKK) are disordered. A compositionally biased stretch (basic and acidic residues) spans 470-483 (KDPQNKERASTKER). Residues 486 to 491 (KKKKRK) carry the Nuclear localization signal motif. Lys500 is covalently cross-linked (Glycyl lysine isopeptide (Lys-Gly) (interchain with G-Cter in SUMO2)). 2 disordered regions span residues 502 to 526 (EELE…ESCP) and 660 to 679 (TASA…EQNG). Ser521 is modified (phosphoserine). Residues 658-813 (RGTASADVST…PSPHATAELF (156 aa)) are nuclease. Positions 683 to 763 (SIVVDMREFR…RPVLLIEFDP (81 aa)) constitute an ERCC4 domain. Ser764 bears the Phosphoserine mark. Residues 837 to 905 (TLPESEKYNP…QLYDFIHTSF (69 aa)) are hhH2, dimerization with ERCC1. The residue at position 911 (Lys911) is an N6-acetyllysine.

Belongs to the XPF family. In terms of assembly, heterodimer composed of ERCC1 and ERCC4/XPF. Interacts with SLX4/BTBD12; this interaction is direct and links the ERCC1-ERCC4/XPF complex to SLX4, which may coordinate the action of the structure-specific endonuclease during DNA repair. It depends on Mg(2+) as a cofactor. Acetylation at Lys-911 by KAT5 promotes interaction with ERCC1 by disrupting a salt bridge between Glu-907 and Lys-911, thereby exposing a second binding site for ERCC1. Deacetylated by SIRT1.

It is found in the nucleus. It localises to the chromosome. Functionally, catalytic component of a structure-specific DNA repair endonuclease responsible for the 5-prime incision during DNA repair, and which is essential for nucleotide excision repair (NER) and interstrand cross-link (ICL) repair. This is DNA repair endonuclease XPF from Homo sapiens (Human).